A 1405-amino-acid chain; its full sequence is ATP-dependent helicase/nuclease subunit A (1405 aa).

The 476-residue stretch at 7–482 (REWTPDQLAA…ILLKANFRSR (476 aa)) folds into the UvrD-like helicase ATP-binding domain. Position 28-35 (28-35 (AAAGAGKT)) interacts with ATP. A UvrD-like helicase C-terminal domain is found at 551–914 (PEAVGAGKGG…RVMSIHRAKG (364 aa)). Disordered regions lie at residues 778–797 (QEPWRDDHPGPGAAAGKAVP) and 1132–1165 (AGKTVAPPGSNIAEAGVEPGVSPPAGAVSPQDET). Positions 787–796 (GPGAAAGKAV) are enriched in low complexity.

This sequence belongs to the helicase family. AddA subfamily. Heterodimer of AddA and AddB/RexB. Requires Mg(2+) as cofactor.

It carries out the reaction Couples ATP hydrolysis with the unwinding of duplex DNA by translocating in the 3'-5' direction.. It catalyses the reaction ATP + H2O = ADP + phosphate + H(+). Its function is as follows. The heterodimer acts as both an ATP-dependent DNA helicase and an ATP-dependent, dual-direction single-stranded exonuclease. Recognizes the chi site generating a DNA molecule suitable for the initiation of homologous recombination. The AddA nuclease domain is required for chi fragment generation; this subunit has the helicase and 3' -&gt; 5' nuclease activities. The sequence is that of ATP-dependent helicase/nuclease subunit A from Moorella thermoacetica (strain ATCC 39073 / JCM 9320).